Reading from the N-terminus, the 328-residue chain is Oligopeptide transport ATP-binding protein AppD (328 aa).

The region spanning 5–256 (LEVNNLKTYF…PLHPYTEGLL (252 aa)) is the ABC transporter domain. Residue 41-48 (GESGSGKS) participates in ATP binding.

It belongs to the ABC transporter superfamily.

The protein localises to the cell membrane. This protein is a component of an oligopeptide permease, a binding protein-dependent transport system. This APP system can completely substitute for the OPP system in both sporulation and genetic competence, though, unlike OPP, is incapable of transporting tripeptides. Probably responsible for energy coupling to the transport system. The chain is Oligopeptide transport ATP-binding protein AppD (appD) from Bacillus subtilis (strain 168).